We begin with the raw amino-acid sequence, 424 residues long: Gamma-glutamyl phosphate reductase (424 aa).

It belongs to the gamma-glutamyl phosphate reductase family.

The protein resides in the cytoplasm. It carries out the reaction L-glutamate 5-semialdehyde + phosphate + NADP(+) = L-glutamyl 5-phosphate + NADPH + H(+). It participates in amino-acid biosynthesis; L-proline biosynthesis; L-glutamate 5-semialdehyde from L-glutamate: step 2/2. Its function is as follows. Catalyzes the NADPH-dependent reduction of L-glutamate 5-phosphate into L-glutamate 5-semialdehyde and phosphate. The product spontaneously undergoes cyclization to form 1-pyrroline-5-carboxylate. The chain is Gamma-glutamyl phosphate reductase from Halorhodospira halophila (strain DSM 244 / SL1) (Ectothiorhodospira halophila (strain DSM 244 / SL1)).